A 544-amino-acid polypeptide reads, in one-letter code: Probable protein kinase UbiB (544 aa).

Positions 123–501 constitute a Protein kinase domain; the sequence is EFDIKPLASA…KRQQATGKFL (379 aa). ATP contacts are provided by residues 129–137 and K152; that span reads LASASIAQV. D287 acts as the Proton acceptor in catalysis. Helical transmembrane passes span 496 to 516 and 519 to 539; these read ATGK…AILV and AYEQ…LLSW.

Belongs to the ABC1 family. UbiB subfamily.

Its subcellular location is the cell inner membrane. The protein operates within cofactor biosynthesis; ubiquinone biosynthesis [regulation]. Functionally, is probably a protein kinase regulator of UbiI activity which is involved in aerobic coenzyme Q (ubiquinone) biosynthesis. This Vibrio campbellii (strain ATCC BAA-1116) protein is Probable protein kinase UbiB.